The following is a 217-amino-acid chain: Probable transaldolase (217 aa).

Lys-83 (schiff-base intermediate with substrate) is an active-site residue.

The protein belongs to the transaldolase family. Type 3B subfamily.

Its subcellular location is the cytoplasm. It catalyses the reaction D-sedoheptulose 7-phosphate + D-glyceraldehyde 3-phosphate = D-erythrose 4-phosphate + beta-D-fructose 6-phosphate. It participates in carbohydrate degradation; pentose phosphate pathway; D-glyceraldehyde 3-phosphate and beta-D-fructose 6-phosphate from D-ribose 5-phosphate and D-xylulose 5-phosphate (non-oxidative stage): step 2/3. Functionally, transaldolase is important for the balance of metabolites in the pentose-phosphate pathway. This chain is Probable transaldolase, found in Novosphingobium aromaticivorans (strain ATCC 700278 / DSM 12444 / CCUG 56034 / CIP 105152 / NBRC 16084 / F199).